We begin with the raw amino-acid sequence, 139 residues long: SPbeta prophage-derived uncharacterized protein YomN (139 aa).

The protein is SPbeta prophage-derived uncharacterized protein YomN (yomN) of Bacillus subtilis (strain 168).